The chain runs to 132 residues: Small ribosomal subunit protein uS8 (132 aa).

The protein belongs to the universal ribosomal protein uS8 family. Part of the 30S ribosomal subunit. Contacts proteins S5 and S12.

In terms of biological role, one of the primary rRNA binding proteins, it binds directly to 16S rRNA central domain where it helps coordinate assembly of the platform of the 30S subunit. The chain is Small ribosomal subunit protein uS8 from Xanthomonas campestris pv. campestris (strain 8004).